Consider the following 172-residue polypeptide: Early E3 18.5 kDa glycoprotein (172 aa).

An N-terminal signal peptide occupies residues 1–19 (MGAILVVLALLSLLGLGSA). Residues 20–136 (NLNPLDHDPC…SKENIVAFSI (117 aa)) lie on the Lumenal side of the membrane. N36 carries an N-linked (GlcNAc...) asparagine; by host glycan. Intrachain disulfides connect C37-C55 and C49-C111. 3 N-linked (GlcNAc...) asparagine; by host glycosylation sites follow: N68, N72, and N102. The chain crosses the membrane as a helical span at residues 137-157 (AYCLVTCIITAIICVCIHLLI). Over 158 to 172 (VIRPRQSNEEKEKMP) the chain is Cytoplasmic. The short motif at 168 to 172 (KEKMP) is the Di-lysine motif element.

The protein belongs to the adenoviridae E19 family. In terms of processing, both disulfide bonds are absolutely critical for the interaction with MHC antigens. Post-translationally, N-glycosylated; high-mannose.

Its subcellular location is the host endoplasmic reticulum membrane. Functionally, binds and retains class I heavy chains in the endoplasmic reticulum during the early period of virus infection, thereby impairing their transport to the cell surface. Also delays the expression of class I alleles that it cannot affect by direct retention. Binds transporters associated with antigen processing (TAP) and acts as a tapasin inhibitor, preventing class I/TAP association. In consequence, infected cells are masked for immune recognition by cytotoxic T-lymphocytes. The protein is Early E3 18.5 kDa glycoprotein of Human adenovirus B serotype 3 (HAdV-3).